Consider the following 336-residue polypeptide: F420-dependent glucose-6-phosphate dehydrogenase (336 aa).

D39 lines the coenzyme F420-(gamma-Glu)n pocket. H40 (proton donor) is an active-site residue. Coenzyme F420-(gamma-Glu)n contacts are provided by residues T76 and 107–108; that span reads TG. The active-site Proton acceptor is the E109. Residues N112, 177 to 178, and 180 to 181 contribute to the coenzyme F420-(gamma-Glu)n site; these read GG and LV. Residues T195, K198, K259, and R283 each contribute to the substrate site.

This sequence belongs to the F420-dependent glucose-6-phosphate dehydrogenase family. In terms of assembly, homodimer.

It catalyses the reaction oxidized coenzyme F420-(gamma-L-Glu)(n) + D-glucose 6-phosphate + H(+) = 6-phospho-D-glucono-1,5-lactone + reduced coenzyme F420-(gamma-L-Glu)(n). Functionally, catalyzes the coenzyme F420-dependent oxidation of glucose 6-phosphate (G6P) to 6-phosphogluconolactone. This chain is F420-dependent glucose-6-phosphate dehydrogenase, found in Nocardia farcinica (strain IFM 10152).